We begin with the raw amino-acid sequence, 167 residues long: UPF0179 protein Pisl_0688 (167 aa).

It belongs to the UPF0179 family.

This chain is UPF0179 protein Pisl_0688, found in Pyrobaculum islandicum (strain DSM 4184 / JCM 9189 / GEO3).